Here is a 365-residue protein sequence, read N- to C-terminus: tRNA 2-selenouridine synthase (365 aa).

In terms of domain architecture, Rhodanese spans 12–136; sequence FLHDVPLLDV…LRMFLIDTTQ (125 aa). Cys-95 serves as the catalytic S-selanylcysteine intermediate.

Belongs to the SelU family. In terms of assembly, monomer.

It catalyses the reaction 5-methylaminomethyl-2-thiouridine(34) in tRNA + selenophosphate + (2E)-geranyl diphosphate + H2O + H(+) = 5-methylaminomethyl-2-selenouridine(34) in tRNA + (2E)-thiogeraniol + phosphate + diphosphate. The catalysed reaction is 5-methylaminomethyl-2-thiouridine(34) in tRNA + (2E)-geranyl diphosphate = 5-methylaminomethyl-S-(2E)-geranyl-thiouridine(34) in tRNA + diphosphate. It carries out the reaction 5-methylaminomethyl-S-(2E)-geranyl-thiouridine(34) in tRNA + selenophosphate + H(+) = 5-methylaminomethyl-2-(Se-phospho)selenouridine(34) in tRNA + (2E)-thiogeraniol. The enzyme catalyses 5-methylaminomethyl-2-(Se-phospho)selenouridine(34) in tRNA + H2O = 5-methylaminomethyl-2-selenouridine(34) in tRNA + phosphate. Functionally, involved in the post-transcriptional modification of the uridine at the wobble position (U34) of tRNA(Lys), tRNA(Glu) and tRNA(Gln). Catalyzes the conversion of 2-thiouridine (S2U-RNA) to 2-selenouridine (Se2U-RNA). Acts in a two-step process involving geranylation of 2-thiouridine (S2U) to S-geranyl-2-thiouridine (geS2U) and subsequent selenation of the latter derivative to 2-selenouridine (Se2U) in the tRNA chain. The polypeptide is tRNA 2-selenouridine synthase (Verminephrobacter eiseniae (strain EF01-2)).